Reading from the N-terminus, the 336-residue chain is Biotin synthase (336 aa).

Residues 51–270 (NQVQCNQLLN…IALARIMMPK (220 aa)) enclose the Radical SAM core domain. [4Fe-4S] cluster contacts are provided by C66, C70, and C73. C110, C141, C201, and R274 together coordinate [2Fe-2S] cluster.

This sequence belongs to the radical SAM superfamily. Biotin synthase family. In terms of assembly, homodimer. [4Fe-4S] cluster serves as cofactor. Requires [2Fe-2S] cluster as cofactor.

It catalyses the reaction (4R,5S)-dethiobiotin + (sulfur carrier)-SH + 2 reduced [2Fe-2S]-[ferredoxin] + 2 S-adenosyl-L-methionine = (sulfur carrier)-H + biotin + 2 5'-deoxyadenosine + 2 L-methionine + 2 oxidized [2Fe-2S]-[ferredoxin]. It participates in cofactor biosynthesis; biotin biosynthesis; biotin from 7,8-diaminononanoate: step 2/2. In terms of biological role, catalyzes the conversion of dethiobiotin (DTB) to biotin by the insertion of a sulfur atom into dethiobiotin via a radical-based mechanism. The polypeptide is Biotin synthase (Rhodopseudomonas palustris (strain ATCC BAA-98 / CGA009)).